We begin with the raw amino-acid sequence, 195 residues long: Glycerol-3-phosphate acyltransferase 2 (195 aa).

A run of 6 helical transmembrane segments spans residues 4–24 (VVSL…VAGV), 52–72 (GAAA…VGLA), 73–93 (LWLA…GVVF), 115–135 (AMLV…LALI), 150–170 (AIPF…SRLG), and 171–191 (GGAE…HLLA).

It belongs to the PlsY family. Probably interacts with PlsX.

It localises to the cell membrane. The catalysed reaction is an acyl phosphate + sn-glycerol 3-phosphate = a 1-acyl-sn-glycero-3-phosphate + phosphate. It functions in the pathway lipid metabolism; phospholipid metabolism. Catalyzes the transfer of an acyl group from acyl-phosphate (acyl-PO(4)) to glycerol-3-phosphate (G3P) to form lysophosphatidic acid (LPA). This enzyme utilizes acyl-phosphate as fatty acyl donor, but not acyl-CoA or acyl-ACP. The protein is Glycerol-3-phosphate acyltransferase 2 of Deinococcus radiodurans (strain ATCC 13939 / DSM 20539 / JCM 16871 / CCUG 27074 / LMG 4051 / NBRC 15346 / NCIMB 9279 / VKM B-1422 / R1).